A 448-amino-acid polypeptide reads, in one-letter code: D-inositol 3-phosphate glycosyltransferase (448 aa).

The segment at 1–21 (MAEQHTGVGRQRGARPWPRPR) is disordered. 1D-myo-inositol 3-phosphate is bound at residue H29. UDP-N-acetyl-alpha-D-glucosamine-binding positions include 35–36 (QP) and G43. 1D-myo-inositol 3-phosphate is bound by residues 40–45 (DAGGMN), K98, Y131, T155, and R175. UDP-N-acetyl-alpha-D-glucosamine-binding residues include R255, K260, and Q321. Mg(2+) is bound by residues Y330, R331, and A333. The UDP-N-acetyl-alpha-D-glucosamine site is built by E343 and E351. Mg(2+) is bound at residue T357.

This sequence belongs to the glycosyltransferase group 1 family. MshA subfamily. In terms of assembly, homodimer.

The enzyme catalyses 1D-myo-inositol 3-phosphate + UDP-N-acetyl-alpha-D-glucosamine = 1D-myo-inositol 2-acetamido-2-deoxy-alpha-D-glucopyranoside 3-phosphate + UDP + H(+). In terms of biological role, catalyzes the transfer of a N-acetyl-glucosamine moiety to 1D-myo-inositol 3-phosphate to produce 1D-myo-inositol 2-acetamido-2-deoxy-glucopyranoside 3-phosphate in the mycothiol biosynthesis pathway. The chain is D-inositol 3-phosphate glycosyltransferase from Salinispora arenicola (strain CNS-205).